We begin with the raw amino-acid sequence, 219 residues long: MNHYIDHTLLLANATTKQINTLCDEAHEHQFFSVCINPDFVEHCAERLNTSNVKICTVIGFPLGANTTAVKVFETQNAISLGADEIDMVVNISDVLDGKWDVIEKEIVAIKEACGPKLLKVIFETCLLTNEQIVKLCNISKRAGADFVKTSTGFSTGGATVEHIKLMRDTVGKQMGVKASGGVRTKETAQAMIDAGASRVGASASVSIVTGEAPTTNGY.

The active-site Proton donor/acceptor is the D87. K149 serves as the catalytic Schiff-base intermediate with acetaldehyde. The Proton donor/acceptor role is filled by K178.

This sequence belongs to the DeoC/FbaB aldolase family. DeoC type 1 subfamily.

It localises to the cytoplasm. The enzyme catalyses 2-deoxy-D-ribose 5-phosphate = D-glyceraldehyde 3-phosphate + acetaldehyde. The protein operates within carbohydrate degradation; 2-deoxy-D-ribose 1-phosphate degradation; D-glyceraldehyde 3-phosphate and acetaldehyde from 2-deoxy-alpha-D-ribose 1-phosphate: step 2/2. Functionally, catalyzes a reversible aldol reaction between acetaldehyde and D-glyceraldehyde 3-phosphate to generate 2-deoxy-D-ribose 5-phosphate. The polypeptide is Deoxyribose-phosphate aldolase 1 (Vibrio vulnificus (strain YJ016)).